Reading from the N-terminus, the 157-residue chain is MVRNIMAKEFSRTRRIAQQLQQELAQVLQRDMKDPRIGFVTVNDVDVSRDLSYAKVFVTFFEEDKAVVQEKLNALISAAPYIRTLVAGRMKLRVMPELRFIYDSSLVEGMRMSNLVSQVINQDKAKQQQFGSEDASVEDEVLGDDVADDADETEGKD.

Residues 127 to 157 form a disordered region; sequence QQQFGSEDASVEDEVLGDDVADDADETEGKD. The segment covering 135–157 has biased composition (acidic residues); the sequence is ASVEDEVLGDDVADDADETEGKD.

It belongs to the RbfA family. In terms of assembly, monomer. Binds 30S ribosomal subunits, but not 50S ribosomal subunits or 70S ribosomes.

Its subcellular location is the cytoplasm. In terms of biological role, one of several proteins that assist in the late maturation steps of the functional core of the 30S ribosomal subunit. Associates with free 30S ribosomal subunits (but not with 30S subunits that are part of 70S ribosomes or polysomes). Required for efficient processing of 16S rRNA. May interact with the 5'-terminal helix region of 16S rRNA. This is Ribosome-binding factor A from Shewanella baltica (strain OS155 / ATCC BAA-1091).